The primary structure comprises 57 residues: UPF0391 membrane protein RPB_2510 (57 aa).

The next 2 helical transmembrane spans lie at 6-26 (WALIFLVISVIAGIFGFTGIS) and 35-55 (ILFYIFAVIFIVLLILGFTIF).

Belongs to the UPF0391 family.

The protein localises to the cell membrane. The protein is UPF0391 membrane protein RPB_2510 of Rhodopseudomonas palustris (strain HaA2).